Consider the following 102-residue polypeptide: UPF0235 protein msl4154 (102 aa).

The protein belongs to the UPF0235 family.

The protein is UPF0235 protein msl4154 of Mesorhizobium japonicum (strain LMG 29417 / CECT 9101 / MAFF 303099) (Mesorhizobium loti (strain MAFF 303099)).